The chain runs to 239 residues: Ribosomal RNA small subunit methyltransferase G (239 aa).

S-adenosyl-L-methionine is bound by residues Gly76, Phe81, 99–101 (DSS), 128–129 (IE), and Arg147.

Belongs to the methyltransferase superfamily. RNA methyltransferase RsmG family.

It localises to the cytoplasm. Specifically methylates the N7 position of a guanine in 16S rRNA. This chain is Ribosomal RNA small subunit methyltransferase G, found in Prochlorococcus marinus (strain MIT 9515).